A 221-amino-acid polypeptide reads, in one-letter code: Glutathione peroxidase (221 aa).

The N-terminal stretch at 1 to 19 (MFIQLLILSYAILLQLIAT) is a signal peptide. Asn28 carries N-linked (GlcNAc...) asparagine glycosylation. Cys72 is an active-site residue. N-linked (GlcNAc...) asparagine glycosylation is found at Asn87 and Asn90.

It belongs to the glutathione peroxidase family. Homotetramer.

The protein resides in the secreted. Its subcellular location is the extracellular space. It catalyses the reaction 2 glutathione + H2O2 = glutathione disulfide + 2 H2O. The protein is Glutathione peroxidase of Dirofilaria immitis (Canine heartworm).